Reading from the N-terminus, the 2947-residue chain is 3'-5' exoribonuclease HELZ2 (2947 aa).

A C3H1-type 1 zinc finger spans residues 85–114 (PMRYQVCHYYRPGLGCRRHWNRCTFARSPE). A C2H2-type zinc finger spans residues 167-187 (CFTCCPPCLCPVDPRGHCPKH). The segment at 221 to 245 (YCMYVGRGVPCRHGASRCEYAHSAV) adopts a C3H1-type 2 zinc-finger fold. The C2H2-type; atypical zinc-finger motif lies at 289–311 (CHACLVTCNSQEAFENHCSSLEH). Residues 769–1317 (VGLIAGRRPE…ELLDESQQVT (549 aa)) form the UvrD-like helicase ATP-binding domain. 790 to 797 (GPFGTGKT) serves as a coordination point for ATP. The interval 809-1290 (QQPHTKVLIC…GGMSEEDSES (482 aa)) is interaction with THRAP3. A DEAA box motif is present at residues 913–916 (DEAA). Positions 1260–1292 (EDTASGNSASRDAAAEVSTLEGGMSEEDSESDF) are disordered. 4 consecutive short sequence motifs (LXXLL motif) follow at residues 1306–1310 (LKELL), 1348–1352 (LWKFL), 1403–1407 (LVQIL), and 2240–2244 (LEGLP). Arg2381 carries the omega-N-methylarginine modification. The tract at residues 2413–2947 (PEPCRGNWPR…RVQRKSALSS (535 aa)) is interaction with THRAP3. The UvrD-like helicase ATP-binding 2 domain occupies 2449 to 2726 (LNQSQDRAVR…IMLDTQYRMH (278 aa)). 2470–2477 (GPPGTGKT) contacts ATP. An LXXLL motif 5 motif is present at residues 2525-2529 (LGGLL).

Belongs to the DNA2/NAM7 helicase family. In terms of assembly, interacts with PPARA (via DNA-binding domain) and PPARG; the interaction stimulates the transcriptional activity of PPARA and PPARG. Interacts with THRAP3; the interaction is direct and HELZ2 and THRAP3 synergistically enhance the transcriptional activity of PPARG. It is probably part of the peroxisome proliferator activated receptor alpha interacting complex (PRIC).

The protein localises to the cytoplasm. The enzyme catalyses Exonucleolytic cleavage in the 3'- to 5'-direction to yield nucleoside 5'-phosphates.. The catalysed reaction is ATP + H2O = ADP + phosphate + H(+). In terms of biological role, can degrade highly structured RNAs through its concerted ATP-dependent RNA helicase and 3' to 5' exoribonuclease activities. Shows a strong preference for pyrimidine over purine residues for its nuclease activity. Acts as a transcriptional coactivator for a number of nuclear receptors including PPARA, PPARG, THRA, THRB and RXRA. This is 3'-5' exoribonuclease HELZ2 (Helz2) from Mus musculus (Mouse).